Here is a 244-residue protein sequence, read N- to C-terminus: Phosphoadenosine 5'-phosphosulfate reductase (244 aa).

C239 functions as the Nucleophile; cysteine thiosulfonate intermediate in the catalytic mechanism.

This sequence belongs to the PAPS reductase family. CysH subfamily.

The protein resides in the cytoplasm. The enzyme catalyses [thioredoxin]-disulfide + sulfite + adenosine 3',5'-bisphosphate + 2 H(+) = [thioredoxin]-dithiol + 3'-phosphoadenylyl sulfate. It participates in sulfur metabolism; hydrogen sulfide biosynthesis; sulfite from sulfate: step 3/3. In terms of biological role, catalyzes the formation of sulfite from phosphoadenosine 5'-phosphosulfate (PAPS) using thioredoxin as an electron donor. This is Phosphoadenosine 5'-phosphosulfate reductase from Citrobacter koseri (strain ATCC BAA-895 / CDC 4225-83 / SGSC4696).